The following is a 267-amino-acid chain: 4,5-DOPA dioxygenase extradiol (267 aa).

4 residues coordinate Zn(2+): His-9, His-47, His-168, and His-222.

It belongs to the DODA-type extradiol aromatic ring-opening dioxygenase family. Zn(2+) is required as a cofactor. The cofactor is Fe(2+). As to expression, expressed in petals. Not detected in leaves, stems and roots.

Its subcellular location is the cytoplasm. The catalysed reaction is L-dopa + O2 = 4-(L-alanin-3-yl)-2-hydroxy-cis,cis-muconate 6-semialdehyde + H(+). Its pathway is pigment biosynthesis; betalain biosynthesis. Its function is as follows. Opens the cyclic ring of dihydroxy-phenylalanine (DOPA) between carbons 4 and 5, thus producing an unstable seco-DOPA that rearranges nonenzymatically to betalamic acid. Produces mainly (S)-betalamic acid. Required for the coloration of flowers. The sequence is that of 4,5-DOPA dioxygenase extradiol (DOD) from Mirabilis jalapa (Garden four-o'clock).